A 57-amino-acid polypeptide reads, in one-letter code: MGEENSTSGTCKPSKTFKAKCSHMVRKQRAKFYILGRCLAMLVCGRGRDRERDRILI.

The N-linked (GlcNAc...) asparagine glycan is linked to asparagine 5. The tract at residues 16–47 is required for DVL/RTFL small polypeptide activity; sequence TFKAKCSHMVRKQRAKFYILGRCLAMLVCGRG. Residues 29 to 45 traverse the membrane as a helical segment; sequence RAKFYILGRCLAMLVCG.

This sequence belongs to the DVL/RTFL small polypeptides family.

The protein resides in the cell membrane. Functionally, small polypeptide acting as a regulatory molecule which coordinates cellular responses required for differentiation, growth and development, probably by restricting polar cell proliferation in lateral organs and coordinating socket cell recruitment and differentiation at trichome sites. The polypeptide is Small polypeptide DEVIL 20 (Arabidopsis thaliana (Mouse-ear cress)).